A 63-amino-acid chain; its full sequence is Small integral membrane protein 43 (63 aa).

2 important for interaction with SLC2A1 and SLC2A3 regions span residues 7–29 (LLLY…FVVI) and 51–57 (HREPWGF). Residues 9 to 29 (LYLALFFFLLFLLFLLLFVVI) form a helical membrane-spanning segment.

In terms of assembly, interacts with glucose transporters SLC2A1/GLUT1 and SLC2A3/GLUT3; the interactions may promote SLC2A1- and SLC2A3-mediated glucose transport to meet the energy needs of mesendoderm differentiation.

It localises to the cell membrane. Required for mesendoderm differentiation. Interacts with glucose transporters and promotes glucose uptake. Probably augments the glucose uptake capacity of glucose transporter proteins to meet the energy needs of mesendoderm differentiation. In Homo sapiens (Human), this protein is Small integral membrane protein 43.